A 523-amino-acid chain; its full sequence is GMP synthase [glutamine-hydrolyzing] (523 aa).

The 198-residue stretch at Lys-8–Asn-205 folds into the Glutamine amidotransferase type-1 domain. Residue Cys-85 is the Nucleophile of the active site. Residues His-179 and Glu-181 contribute to the active site. The region spanning Trp-206–Arg-398 is the GMPS ATP-PPase domain. ATP is bound at residue Ser-233–Ser-239.

As to quaternary structure, homodimer.

It carries out the reaction XMP + L-glutamine + ATP + H2O = GMP + L-glutamate + AMP + diphosphate + 2 H(+). The protein operates within purine metabolism; GMP biosynthesis; GMP from XMP (L-Gln route): step 1/1. Catalyzes the synthesis of GMP from XMP. The polypeptide is GMP synthase [glutamine-hydrolyzing] (Actinobacillus succinogenes (strain ATCC 55618 / DSM 22257 / CCUG 43843 / 130Z)).